A 419-amino-acid polypeptide reads, in one-letter code: UDP-N-acetylglucosamine 1-carboxyvinyltransferase (419 aa).

Phosphoenolpyruvate is bound at residue K22–N23. R92 provides a ligand contact to UDP-N-acetyl-alpha-D-glucosamine. The Proton donor role is filled by C116. C116 is subject to 2-(S-cysteinyl)pyruvic acid O-phosphothioketal. UDP-N-acetyl-alpha-D-glucosamine-binding positions include R121–Q125, D306, and I328.

This sequence belongs to the EPSP synthase family. MurA subfamily.

The protein localises to the cytoplasm. It carries out the reaction phosphoenolpyruvate + UDP-N-acetyl-alpha-D-glucosamine = UDP-N-acetyl-3-O-(1-carboxyvinyl)-alpha-D-glucosamine + phosphate. It functions in the pathway cell wall biogenesis; peptidoglycan biosynthesis. Functionally, cell wall formation. Adds enolpyruvyl to UDP-N-acetylglucosamine. Target for the antibiotic phosphomycin. The protein is UDP-N-acetylglucosamine 1-carboxyvinyltransferase of Acinetobacter guillouiae (Acinetobacter genomosp. 11).